A 305-amino-acid chain; its full sequence is uncharacterized protein (305 aa).

This is an uncharacterized protein from Methanocaldococcus jannaschii (strain ATCC 43067 / DSM 2661 / JAL-1 / JCM 10045 / NBRC 100440) (Methanococcus jannaschii).